The primary structure comprises 151 residues: Small ribosomal subunit protein bS6 (151 aa).

Residues 94 to 151 (EEHEQGPSAMMRKRDDDDRGERGERPRGPRPERGERGERGERGPRRPREDNIGEEGLY) are disordered. The span at 105–144 (RKRDDDDRGERGERPRGPRPERGERGERGERGPRRPREDN) shows a compositional bias: basic and acidic residues.

This sequence belongs to the bacterial ribosomal protein bS6 family.

Functionally, binds together with bS18 to 16S ribosomal RNA. The protein is Small ribosomal subunit protein bS6 of Beijerinckia indica subsp. indica (strain ATCC 9039 / DSM 1715 / NCIMB 8712).